Reading from the N-terminus, the 459-residue chain is C-type lectin domain family 14 member A (459 aa).

Residues 1 to 21 (MRPALALCLLCPAFWPRPGNG) form the signal peptide. At 22-386 (EHPTADRAAC…VSLTFDTSST (365 aa)) the chain is on the extracellular side. The C-type lectin domain maps to 33–173 (ASGACYSLHH…LRTDGYLCKY (141 aa)). Cysteine 143 and cysteine 162 form a disulfide bridge. Asparagine 189 is a glycosylation site (N-linked (GlcNAc...) asparagine). The 43-residue stretch at 246-288 (PCSGRYLLAGKCVELPDCLDHLGDFTCECAVGFELGKDGRSCE) folds into the EGF-like domain. N-linked (GlcNAc...) asparagine glycosylation is found at asparagine 306, asparagine 317, and asparagine 370. Residues 387-407 (VVFILVSIAVIVLVVLTITVL) traverse the membrane as a helical segment. The Cytoplasmic portion of the chain corresponds to 408–459 (GLFKLCFHKSRSSRTGKGALDSPGVECDAEATSLHHSSTQCTDIGVKSGTVA). Position 440 is a phosphoserine (serine 440).

It is found in the membrane. In Mus musculus (Mouse), this protein is C-type lectin domain family 14 member A (Clec14a).